The sequence spans 439 residues: uncharacterized protein (439 aa).

This is an uncharacterized protein from Caenorhabditis elegans.